Here is a 150-residue protein sequence, read N- to C-terminus: Early 4 ORF6/7 control protein (150 aa).

Residues 1-31 form a disordered region; sequence MTTSGVPFGMTLRPTRSRLSRRTPYSRDRLP. A Nuclear localization signal motif is present at residues 1–58; that stretch reads MTTSGVPFGMTLRPTRSRLSRRTPYSRDRLPPFETETRATILEDHPLLPECNTLTMHN.

Belongs to the adenoviridae E4-orf6/7 family. As to quaternary structure, interacts with host E2F proteins.

It is found in the host nucleus. Modulates viral and host transcriptional activity to promote viral genome replication. Stimulates viral E2a promoter activity by binding and inducing dimerization of host E2F. During viral infection E1A protein binds to cellular retinablastoma (RB) family members and dissociates these repressors from a complex with E2F proteins. Free E2F is then bound to E4orf6/7 which leads to transactivation of viral E2 promoter, and cellular promoters such as E2F-1 promoter. Activation of cellular E2F targets promote cell cycle S phase and thereby possibly favorises viral DNA replication process. The polypeptide is Early 4 ORF6/7 control protein (Human adenovirus C serotype 2 (HAdV-2)).